The chain runs to 160 residues: Eosinophil cationic protein (160 aa).

A signal peptide spans 1 to 27; that stretch reads MVPKLFTSQICLLLLLGLMGVEGSLHA. The interval 28-72 is required for nearly all of the bactericidal activities; partially involved in LPS-binding; it reads RPPQFTKAQWFAIQHINVNPPRCTIAMRVINNYQRRCKNQNTFLR. The Proton acceptor role is filled by histidine 42. 4 disulfides stabilise this stretch: cysteine 50/cysteine 110, cysteine 64/cysteine 123, cysteine 82/cysteine 138, and cysteine 89/cysteine 98. Tyrosine 60 bears the 3'-nitrotyrosine mark. Residue 65-69 coordinates substrate; sequence KNQNT. N-linked (GlcNAc...) asparagine glycosylation is found at asparagine 92 and asparagine 119. Histidine 155 serves as the catalytic Proton donor.

The protein belongs to the pancreatic ribonuclease family. Interacts with bacterial lipopolysaccharide (LPS) and lipoteichoic acid (LTA). In vitro interacts with phospholipid bilayers.

The protein localises to the secreted. In terms of biological role, cytotoxin and helminthotoxin with low-efficiency ribonuclease activity. Possesses a wide variety of biological activities. Exhibits antibacterial activity. In Macaca fascicularis (Crab-eating macaque), this protein is Eosinophil cationic protein (RNASE3).